Consider the following 194-residue polypeptide: Peptidyl-tRNA hydrolase (194 aa).

Residue Tyr17 participates in tRNA binding. The Proton acceptor role is filled by His22. TRNA is bound by residues Tyr68, Asn70, and Asn116.

This sequence belongs to the PTH family. In terms of assembly, monomer.

The protein resides in the cytoplasm. It catalyses the reaction an N-acyl-L-alpha-aminoacyl-tRNA + H2O = an N-acyl-L-amino acid + a tRNA + H(+). Hydrolyzes ribosome-free peptidyl-tRNAs (with 1 or more amino acids incorporated), which drop off the ribosome during protein synthesis, or as a result of ribosome stalling. In terms of biological role, catalyzes the release of premature peptidyl moieties from peptidyl-tRNA molecules trapped in stalled 50S ribosomal subunits, and thus maintains levels of free tRNAs and 50S ribosomes. The chain is Peptidyl-tRNA hydrolase from Chromohalobacter salexigens (strain ATCC BAA-138 / DSM 3043 / CIP 106854 / NCIMB 13768 / 1H11).